A 319-amino-acid chain; its full sequence is Large ribosomal subunit protein eL8 (319 aa).

Lys-87 bears the N6-acetyllysine mark. A Glycyl lysine isopeptide (Lys-Gly) (interchain with G-Cter in SUMO2) cross-link involves residue Lys-101. Lys-150 carries the post-translational modification N6-acetyllysine; alternate. Residue Lys-150 forms a Glycyl lysine isopeptide (Lys-Gly) (interchain with G-Cter in SUMO2); alternate linkage. Lys-178 is covalently cross-linked (Glycyl lysine isopeptide (Lys-Gly) (interchain with G-Cter in SUMO2)). At Lys-270 the chain carries N6-acetyllysine. Lys-298 is covalently cross-linked (Glycyl lysine isopeptide (Lys-Gly) (interchain with G-Cter in SUMO2)).

The protein belongs to the eukaryotic ribosomal protein eL8 family. As to quaternary structure, component of the large ribosomal subunit. Interacts with CRY1. Interacts with DICER1, AGO2, TARBP2, MOV10 and EIF6; they form a large RNA-induced silencing complex (RISC).

Its subcellular location is the cytoplasm. In terms of biological role, component of the large ribosomal subunit. The ribosome is a large ribonucleoprotein complex responsible for the synthesis of proteins in the cell. This Oryctolagus cuniculus (Rabbit) protein is Large ribosomal subunit protein eL8 (RPL7A).